A 187-amino-acid chain; its full sequence is Protein TfaD (187 aa).

In the C-terminal section; belongs to the tfa family.

This is Protein TfaD (tfaD) from Escherichia coli (strain K12).